Here is a 76-residue protein sequence, read N- to C-terminus: UPF0248 protein MMP0286 (76 aa).

It belongs to the UPF0248 family.

In Methanococcus maripaludis (strain DSM 14266 / JCM 13030 / NBRC 101832 / S2 / LL), this protein is UPF0248 protein MMP0286.